The sequence spans 111 residues: COX assembly mitochondrial protein (111 aa).

Residues 39–82 (YKKCANFVQAMADCAKANGMKVFPTCDKQRDEMKSCLLFYQTDE) enclose the CHCH domain. Short sequence motifs (cx9C motif) lie at residues 42-52 (CANFVQAMADC) and 64-74 (CDKQRDEMKSC). 2 disulfides stabilise this stretch: cysteine 42/cysteine 74 and cysteine 52/cysteine 64.

It belongs to the CMC family.

The protein resides in the mitochondrion inner membrane. Its function is as follows. Required for mitochondrial cytochrome c oxidase (COX) assembly and respiration. Binds copper. May be involved in copper trafficking and distribution to mitochondrial COX and SOD1. This Saccharomyces cerevisiae (strain YJM789) (Baker's yeast) protein is COX assembly mitochondrial protein (CMC1).